The following is a 100-amino-acid chain: Protein Tat (100 aa).

An interaction with human CREBBP region spans residues 1 to 24 (MDPIDPDLEPWKHPGSQPRTVCNN). The tract at residues 1-48 (MDPIDPDLEPWKHPGSQPRTVCNNCYCKACCYHCIYCFTKKGLGISYG) is transactivation. Zn(2+) is bound by residues cysteine 22, cysteine 25, and cysteine 27. The segment at 22–37 (CNNCYCKACCYHCIYC) is cysteine-rich. Lysine 28 bears the N6-acetyllysine; by host PCAF mark. Positions 30, 33, 34, and 37 each coordinate Zn(2+). The core stretch occupies residues 38–48 (FTKKGLGISYG). The segment covering 48-58 (GRKKRTTRRRT) has biased composition (basic residues). Positions 48 to 100 (GRKKRTTRRRTAPAGSKNNQDSIPKQPLSQSRGNKEGSEKSTKEVASKTEADQ) are disordered. The short motif at 49 to 57 (RKKRTTRRR) is the Nuclear localization signal, RNA-binding (TAR), and protein transduction element. Positions 49 to 87 (RKKRTTRRRTAPAGSKNNQDSIPKQPLSQSRGNKEGSEK) are interaction with the host capping enzyme RNGTT. 2 positions are modified to N6-acetyllysine; by host EP300 and GCN5L2: lysine 50 and lysine 51. Arginine 52 bears the Asymmetric dimethylarginine; by host PRMT6 mark. The span at 63–79 (SKNNQDSIPKQPLSQSR) shows a compositional bias: polar residues. Residue lysine 72 forms a Glycyl lysine isopeptide (Lys-Gly) (interchain with G-Cter in ubiquitin) linkage. Residues 80-100 (GNKEGSEKSTKEVASKTEADQ) show a composition bias toward basic and acidic residues.

Belongs to the lentiviruses Tat family. In terms of assembly, interacts with host CCNT1. Associates with the P-TEFb complex composed at least of Tat, P-TEFb (CDK9 and CCNT1), TAR RNA, RNA Pol II. Recruits the HATs CREBBP, TAF1/TFIID, EP300, PCAF and GCN5L2. Interacts with host KAT5/Tip60; this interaction targets the latter to degradation. Interacts with the host deacetylase SIRT1. Interacts with host capping enzyme RNGTT; this interaction stimulates RNGTT. Binds to host KDR, and to the host integrins ITGAV/ITGB3 and ITGA5/ITGB1. Interacts with host KPNB1/importin beta-1 without previous binding to KPNA1/importin alpha-1. Interacts with EIF2AK2. Interacts with host nucleosome assembly protein NAP1L1; this interaction may be required for the transport of Tat within the nucleus, since the two proteins interact at the nuclear rim. Interacts with host C1QBP/SF2P32; this interaction involves lysine-acetylated Tat. Interacts with the host chemokine receptors CCR2, CCR3 and CXCR4. Interacts with host DPP4/CD26; this interaction may trigger an anti-proliferative effect. Interacts with host LDLR. Interacts with the host extracellular matrix metalloproteinase MMP1. Interacts with host PRMT6; this interaction mediates Tat's methylation. Interacts with, and is ubiquitinated by MDM2/Hdm2. Interacts with host PSMC3 and HTATIP2. Interacts with STAB1; this interaction may overcome SATB1-mediated repression of IL2 and IL2RA (interleukin) in T cells by binding to the same domain than HDAC1. Interacts (when acetylated) with human CDK13, thereby increasing HIV-1 mRNA splicing and promoting the production of the doubly spliced HIV-1 protein Nef. Interacts with host TBP; this interaction modulates the activity of transcriptional pre-initiation complex. Interacts with host RELA. Post-translationally, asymmetrical arginine methylation by host PRMT6 seems to diminish the transactivation capacity of Tat and affects the interaction with host CCNT1. Acetylation by EP300, CREBBP, GCN5L2/GCN5 and PCAF regulates the transactivation activity of Tat. EP300-mediated acetylation of Lys-50 promotes dissociation of Tat from the TAR RNA through the competitive binding to PCAF's bromodomain. In addition, the non-acetylated Tat's N-terminus can also interact with PCAF. PCAF-mediated acetylation of Lys-28 enhances Tat's binding to CCNT1. Lys-50 is deacetylated by SIRT1. In terms of processing, polyubiquitination by host MDM2 does not target Tat to degradation, but activates its transactivation function and fosters interaction with CCNT1 and TAR RNA. Post-translationally, phosphorylated by EIF2AK2 on serine and threonine residues adjacent to the basic region important for TAR RNA binding and function. Phosphorylation of Tat by EIF2AK2 is dependent on the prior activation of EIF2AK2 by dsRNA.

Its subcellular location is the host nucleus. The protein resides in the host nucleolus. It is found in the host cytoplasm. It localises to the secreted. Transcriptional activator that increases RNA Pol II processivity, thereby increasing the level of full-length viral transcripts. Recognizes a hairpin structure at the 5'-LTR of the nascent viral mRNAs referred to as the transactivation responsive RNA element (TAR) and recruits the cyclin T1-CDK9 complex (P-TEFb complex) that will in turn hyperphosphorylate the RNA polymerase II to allow efficient elongation. The CDK9 component of P-TEFb and other Tat-activated kinases hyperphosphorylate the C-terminus of RNA Pol II that becomes stabilized and much more processive. Other factors such as HTATSF1/Tat-SF1, SUPT5H/SPT5, and HTATIP2 are also important for Tat's function. Besides its effect on RNA Pol II processivity, Tat induces chromatin remodeling of proviral genes by recruiting the histone acetyltransferases (HATs) CREBBP, EP300 and PCAF to the chromatin. This also contributes to the increase in proviral transcription rate, especially when the provirus integrates in transcriptionally silent region of the host genome. To ensure maximal activation of the LTR, Tat mediates nuclear translocation of NF-kappa-B by interacting with host RELA. Through its interaction with host TBP, Tat may also modulate transcription initiation. Tat can reactivate a latently infected cell by penetrating in it and transactivating its LTR promoter. In the cytoplasm, Tat is thought to act as a translational activator of HIV-1 mRNAs. In terms of biological role, extracellular circulating Tat can be endocytosed by surrounding uninfected cells via the binding to several surface receptors such as CD26, CXCR4, heparan sulfate proteoglycans (HSPG) or LDLR. Neurons are rarely infected, but they internalize Tat via their LDLR. Through its interaction with nuclear HATs, Tat is potentially able to control the acetylation-dependent cellular gene expression. Modulates the expression of many cellular genes involved in cell survival, proliferation or in coding for cytokines or cytokine receptors. Tat plays a role in T-cell and neurons apoptosis. Tat induced neurotoxicity and apoptosis probably contribute to neuroAIDS. Circulating Tat also acts as a chemokine-like and/or growth factor-like molecule that binds to specific receptors on the surface of the cells, affecting many cellular pathways. In the vascular system, Tat binds to ITGAV/ITGB3 and ITGA5/ITGB1 integrins dimers at the surface of endothelial cells and competes with bFGF for heparin-binding sites, leading to an excess of soluble bFGF. The chain is Protein Tat from Pan (chimpanzees).